Reading from the N-terminus, the 356-residue chain is NAC domain-containing protein JA2L (356 aa).

The 149-residue stretch at 14 to 162 folds into the NAC domain; the sequence is LPPGFRFYPT…DWVLCRIYKK (149 aa). Residues 111–168 mediate DNA binding; it reads VGIKKALVFYIGKAPKGTKTNWIMHEYRLSEPTTKTGSSRLDDWVLCRIYKKNSGGQK. A disordered region spans residues 163 to 191; it reads NSGGQKSSCSDLQNKDISHASSSSSSSQF. The span at 164–174 shows a compositional bias: polar residues; that stretch reads SGGQKSSCSDL.

In terms of tissue distribution, expressed in guard cells of the epidermis.

The protein localises to the nucleus. Transcription factor that acts downstream of MYC2 in the jasmonate-mediated response to Botrytis cinerea infection. With MYC2 forms a transcription module that regulates wounding-responsive genes. Involved in jasmonate- and coronatine-mediated stomatal reopening in response to Pseudomonas syringae pv tomato DC3000 infection. Regulates the expression of threonine deaminase 2 (TD2) through promoter binding. The polypeptide is NAC domain-containing protein JA2L (Solanum lycopersicum (Tomato)).